Here is an 828-residue protein sequence, read N- to C-terminus: Periplasmic nitrate reductase (828 aa).

A signal peptide (tat-type signal) is located at residues 1–31 (MKLSRRSFMKANAVAAAAAAAGLSVPGVARA). The 4Fe-4S Mo/W bis-MGD-type domain maps to 39-95 (IKWDKAPCRFCGTGCGVLVGTQQGRVVACQGDPDAPVNRGLNCIKGYFLPKIMYGKD). Residues Cys-46, Cys-49, Cys-53, and Cys-81 each coordinate [4Fe-4S] cluster. Residues Lys-83, Gln-150, Asn-175, Cys-179, 212-219 (WGSNMAEM), 243-247 (STFQH), 262-264 (QSD), Met-372, Gln-376, Asn-482, 508-509 (SD), Lys-531, Asp-558, and 718-727 (TGRVLEHWHT) contribute to the Mo-bis(molybdopterin guanine dinucleotide) site. Phe-794 contacts substrate. Positions 802 and 819 each coordinate Mo-bis(molybdopterin guanine dinucleotide).

Belongs to the prokaryotic molybdopterin-containing oxidoreductase family. NasA/NapA/NarB subfamily. In terms of assembly, component of the periplasmic nitrate reductase NapAB complex composed of NapA and NapB. Requires [4Fe-4S] cluster as cofactor. The cofactor is Mo-bis(molybdopterin guanine dinucleotide). Post-translationally, predicted to be exported by the Tat system. The position of the signal peptide cleavage has not been experimentally proven.

The protein localises to the periplasm. It catalyses the reaction 2 Fe(II)-[cytochrome] + nitrate + 2 H(+) = 2 Fe(III)-[cytochrome] + nitrite + H2O. Its function is as follows. Catalytic subunit of the periplasmic nitrate reductase complex NapAB. Receives electrons from NapB and catalyzes the reduction of nitrate to nitrite. This Salmonella dublin (strain CT_02021853) protein is Periplasmic nitrate reductase.